The sequence spans 427 residues: MAKINELLRESTTTNSNSIGRPNLVALTRATTKLIYSDIVATQRTNQPVAAFYGIKYLNPDNEFTFKTGATYAGEAGYVDREQITELTEESKLTLNKGDLFKYNNIVYKVLEDTPFATIEESDLELALQIAIVLLKVRLFSDAASTSKFESSDSEIADARFQINKWQTAVKSRKLKTGITVELAQDLEANGFDAPNFLEDLLATEMADEINKDILQSLITVSKRYKVTGITDSGFIDLSYASAPEAGRSLYRMVCEMVSHIQKESTYTATFCVASARAAAILAASGWLKHKPEDDKYLSQNAYGFLANGLPLYCDTNSPLDYVIVGVVENIGEKEIVGSIFYAPYTEGLDLDDPEHVGAFKVVVDPESLQPSIGLLVRYALSANPYTVAKDEKEARIIDGGDMDKMAGRSDLSVLLGVKLPKIIIDE.

This sequence belongs to the Tevenvirinae capsid vertex family. In terms of assembly, homopentamer. Interacts with the portal protein. Interacts with the major capsid protein that forms 160 hexamers. In terms of processing, proteolytic cleavage at the N-terminus by the prohead core protein protease gives rise to the mature capsid vertex protein.

Its subcellular location is the virion. Its function is as follows. Capsid protein that self-associates to form pentons, building the capsid in association with hexamers of the major capsid protein and one dodecamer of the portal protein. The capsid vertex protein self-associates to form 11 pentons, building the T=13 laevo capsid in association with 160 hexamers of the major capsid protein. This is Capsid vertex protein (24) from Escherichia coli (Bacteriophage T4).